The following is a 424-amino-acid chain: CinA-like protein (424 aa).

Belongs to the CinA family.

The sequence is that of CinA-like protein from Shewanella baltica (strain OS155 / ATCC BAA-1091).